A 111-amino-acid polypeptide reads, in one-letter code: MQETVVFEWGSFDVRTKEKAMKVVCEFPGVTVIDVKERGKLKVTGQFDKFIMTKKLKKICDYVDITAVGPEGQPAQNRNPVKKPEPKVIRGRPYPPQKKTPGKNSDECIIL.

The HMA domain maps to 1 to 68 (MQETVVFEWG…ICDYVDITAV (68 aa)). The tract at residues 68–111 (VGPEGQPAQNRNPVKKPEPKVIRGRPYPPQKKTPGKNSDECIIL) is disordered. Position 108 is a cysteine methyl ester (Cys-108). The S-farnesyl cysteine moiety is linked to residue Cys-108. A propeptide spans 109–111 (IIL) (removed in mature form).

The protein belongs to the HIPP family.

Its function is as follows. Probable heavy-metal-binding protein. The protein is Heavy metal-associated isoprenylated plant protein 10 of Arabidopsis thaliana (Mouse-ear cress).